A 743-amino-acid chain; its full sequence is TSL-kinase interacting protein 1 (743 aa).

Residues Arg-53–Asn-104 enclose the SANT domain. Disordered stretches follow at residues Ser-486–Trp-523 and Ser-626–Gly-679. Over residues Val-488–Tyr-499 the composition is skewed to basic and acidic residues.

As to quaternary structure, interacts only with active kinase forms of TOUSLED. Interacts with SNL1. Post-translationally, phosphorylated in vitro by TOUSLED. As to expression, expressed in flowers, roots and leaves.

It localises to the nucleus. The sequence is that of TSL-kinase interacting protein 1 (TKI1) from Arabidopsis thaliana (Mouse-ear cress).